The chain runs to 448 residues: Mitochondrial distribution and morphology protein 10 (448 aa).

Belongs to the MDM10 family. As to quaternary structure, component of the ER-mitochondria encounter structure (ERMES) or MDM complex, composed of MMM1, MDM10, MDM12 and MDM34. Associates with the mitochondrial outer membrane sorting assembly machinery SAM(core) complex.

Its subcellular location is the mitochondrion outer membrane. Functionally, component of the ERMES/MDM complex, which serves as a molecular tether to connect the endoplasmic reticulum and mitochondria. Components of this complex are involved in the control of mitochondrial shape and protein biogenesis and may function in phospholipid exchange. MDM10 is involved in the late assembly steps of the general translocase of the mitochondrial outer membrane (TOM complex). Functions in the TOM40-specific route of the assembly of outer membrane beta-barrel proteins, including the association of TOM40 with the receptor TOM22 and small TOM proteins. Can associate with the SAM(core) complex as well as the MDM12-MMM1 complex, both involved in late steps of the major beta-barrel assembly pathway, that is responsible for biogenesis of all outer membrane beta-barrel proteins. May act as a switch that shuttles between both complexes and channels precursor proteins into the TOM40-specific pathway. Plays a role in mitochondrial morphology and in the inheritance of mitochondria. This is Mitochondrial distribution and morphology protein 10 from Podospora anserina (strain S / ATCC MYA-4624 / DSM 980 / FGSC 10383) (Pleurage anserina).